The following is a 130-amino-acid chain: Large ribosomal subunit protein bL17 (130 aa).

Belongs to the bacterial ribosomal protein bL17 family. As to quaternary structure, part of the 50S ribosomal subunit. Contacts protein L32.

This Buchnera aphidicola subsp. Acyrthosiphon pisum (strain APS) (Acyrthosiphon pisum symbiotic bacterium) protein is Large ribosomal subunit protein bL17.